The following is a 193-amino-acid chain: Adenine phosphoribosyltransferase (193 aa).

This sequence belongs to the purine/pyrimidine phosphoribosyltransferase family. As to quaternary structure, homodimer.

It is found in the cytoplasm. It carries out the reaction AMP + diphosphate = 5-phospho-alpha-D-ribose 1-diphosphate + adenine. Its pathway is purine metabolism; AMP biosynthesis via salvage pathway; AMP from adenine: step 1/1. In terms of biological role, catalyzes a salvage reaction resulting in the formation of AMP, that is energically less costly than de novo synthesis. This Bifidobacterium longum subsp. infantis (strain ATCC 15697 / DSM 20088 / JCM 1222 / NCTC 11817 / S12) protein is Adenine phosphoribosyltransferase.